We begin with the raw amino-acid sequence, 270 residues long: Eukaryotic translation initiation factor 3 subunit G-1 (270 aa).

An RRM domain is found at 189–267; the sequence is AAIRISNLSE…LILSVEWSKP (79 aa).

It belongs to the eIF-3 subunit G family. In terms of assembly, component of the eukaryotic translation initiation factor 3 (eIF-3) complex. The eIF-3 complex interacts with pix.

It localises to the cytoplasm. RNA-binding component of the eukaryotic translation initiation factor 3 (eIF-3) complex, which is involved in protein synthesis of a specialized repertoire of mRNAs and, together with other initiation factors, stimulates binding of mRNA and methionyl-tRNAi to the 40S ribosome. The eIF-3 complex specifically targets and initiates translation of a subset of mRNAs involved in cell proliferation. This subunit can bind 18S rRNA. This is Eukaryotic translation initiation factor 3 subunit G-1 from Drosophila ananassae (Fruit fly).